The chain runs to 494 residues: 4-trimethylaminobutyraldehyde dehydrogenase (494 aa).

Residue Ser-2 is modified to N-acetylserine; in 4-trimethylaminobutyraldehyde dehydrogenase, N-terminally processed. Lys-30 carries the N6-acetyllysine; alternate modification. An N6-succinyllysine; alternate modification is found at Lys-30. Lys-59 is subject to N6-succinyllysine. NAD(+) contacts are provided by residues Lys-180 and Gly-232–Thr-236. The active-site Proton acceptor is Glu-254. Cys-288 serves as the catalytic Nucleophile. An N6-acetyllysine modification is found at Lys-298. At Lys-303 the chain carries N6-acetyllysine; alternate. Lys-303 bears the N6-succinyllysine; alternate mark. Lys-344 carries the N6-acetyllysine modification. Glu-391 contributes to the NAD(+) binding site.

Belongs to the aldehyde dehydrogenase family. As to quaternary structure, homotetramer. In terms of tissue distribution, detected in brain (at protein level). High expression in adult liver, skeletal muscle, and kidney. Low levels in heart, pancreas, lung and brain. Expressed in all regions of the brain. Expression levels are variable in the different brain areas, with the highest levels in the spinal cord and the lowest in the occipital pole.

It localises to the cytoplasm. It is found in the cytosol. The enzyme catalyses 4-(trimethylamino)butanal + NAD(+) + H2O = 4-(trimethylamino)butanoate + NADH + 2 H(+). It carries out the reaction an aldehyde + NAD(+) + H2O = a carboxylate + NADH + 2 H(+). The catalysed reaction is 4-aminobutanal + NAD(+) + H2O = 4-aminobutanoate + NADH + 2 H(+). It catalyses the reaction formaldehyde + NAD(+) + H2O = formate + NADH + 2 H(+). The enzyme catalyses acetaldehyde + NAD(+) + H2O = acetate + NADH + 2 H(+). It carries out the reaction imidazole-4-acetaldehyde + NAD(+) + H2O = imidazole-4-acetate + NADH + 2 H(+). The catalysed reaction is acrolein + NAD(+) + H2O = acrylate + NADH + 2 H(+). It catalyses the reaction (5-hydroxyindol-3-yl)acetaldehyde + NAD(+) + H2O = (5-hydroxyindol-3-yl)acetate + NADH + 2 H(+). The enzyme catalyses 3,4-dihydroxyphenylacetaldehyde + NAD(+) + H2O = 3,4-dihydroxyphenylacetate + NADH + 2 H(+). It carries out the reaction spermine monoaldehyde + NAD(+) + H2O = N-(2-carboxyethyl)spermidine + NADH + 2 H(+). The catalysed reaction is propanal + NAD(+) + H2O = propanoate + NADH + 2 H(+). It catalyses the reaction butanal + NAD(+) + H2O = butanoate + NADH + 2 H(+). The enzyme catalyses pentanal + NAD(+) + H2O = pentanoate + NADH + 2 H(+). It carries out the reaction hexanal + NAD(+) + H2O = hexanoate + NADH + 2 H(+). The protein operates within amine and polyamine biosynthesis; carnitine biosynthesis. Converts gamma-trimethylaminobutyraldehyde into gamma-butyrobetaine with high efficiency (in vitro). Can catalyze the irreversible oxidation of a broad range of aldehydes to the corresponding acids in an NAD-dependent reaction, but with low efficiency. Catalyzes the oxidation of aldehydes arising from biogenic amines and polyamines. The protein is 4-trimethylaminobutyraldehyde dehydrogenase (ALDH9A1) of Homo sapiens (Human).